Consider the following 273-residue polypeptide: Octanoyltransferase (273 aa).

Residues 35-254 (DRVPDTCLLL…HLRDILENAE (220 aa)) form the BPL/LPL catalytic domain. Substrate contacts are provided by residues 73–80 (RGGKITWH), 184–186 (AIG), and 197–199 (GFA). The active-site Acyl-thioester intermediate is the Cys215.

It belongs to the LipB family.

The protein localises to the cytoplasm. It carries out the reaction octanoyl-[ACP] + L-lysyl-[protein] = N(6)-octanoyl-L-lysyl-[protein] + holo-[ACP] + H(+). It participates in protein modification; protein lipoylation via endogenous pathway; protein N(6)-(lipoyl)lysine from octanoyl-[acyl-carrier-protein]: step 1/2. In terms of biological role, catalyzes the transfer of endogenously produced octanoic acid from octanoyl-acyl-carrier-protein onto the lipoyl domains of lipoate-dependent enzymes. Lipoyl-ACP can also act as a substrate although octanoyl-ACP is likely to be the physiological substrate. In Streptomyces griseus subsp. griseus (strain JCM 4626 / CBS 651.72 / NBRC 13350 / KCC S-0626 / ISP 5235), this protein is Octanoyltransferase.